Consider the following 354-residue polypeptide: G-protein coupled estrogen receptor 1 (354 aa).

At 1 to 40 the chain is on the extracellular side; that stretch reads MEEQTTSLVWIYVNSTEQLNTSYEYNTTYLIEDSDKYQSY. A helical transmembrane segment spans residues 41 to 61; that stretch reads VIGLFLSCLYTILLFPIGFIG. Over 62 to 81 the chain is Cytoplasmic; it reads NILILVVNLNHRGKMAIPDL. Residues 82 to 102 form a helical membrane-spanning segment; it reads YFVNLAVADLILVADSLIEVF. The Extracellular portion of the chain corresponds to 103–112; sequence NLNEKYYDYA. A helical membrane pass occupies residues 113 to 133; sequence VLCTFMSLFLQVNMYSSIFFL. The cysteines at positions 115 and 192 are disulfide-linked. The Cytoplasmic portion of the chain corresponds to 134 to 160; that stretch reads TWMSFDRYIALANSMSSSPLRTMQHAK. Residues 161 to 181 traverse the membrane as a helical segment; that stretch reads LSCGLIWMASILATLLPFTIV. At 182–202 the chain is on the extracellular side; the sequence is QTQHRGEVHFCFANVFEIQWL. The helical transmembrane segment at 203–223 threads the bilayer; sequence EVTIGFLVPFSIIGLCYSLIG. Over 224–245 the chain is Cytoplasmic; it reads RILMRSQKHRGLWPRRQKALRM. The chain crosses the membrane as a helical span at residues 246 to 266; that stretch reads IVVVVLVFFICWLPENVFISI. The Extracellular segment spans residues 267 to 292; the sequence is QLLQGTADPSQRTATTLRHDYPLTGH. Residues 293–313 traverse the membrane as a helical segment; the sequence is IVNLAAFSNSCLNPIIYSFLG. Residues 314–353 are Cytoplasmic-facing; the sequence is ETFRDKLRLFIKQKASWSVVNRFCHHGLDLHLPVRSEVSE.

This sequence belongs to the G-protein coupled receptor 1 family. Homodimer. Heterodimer. Expressed in oocytes (at protein level). Highly expressed in brain, heart, testis and ovary. Weakly expressed in muscle and intestine.

The protein localises to the nucleus. It is found in the cytoplasm. Its subcellular location is the perinuclear region. It localises to the cytoskeleton. The protein resides in the cytoplasmic vesicle membrane. The protein localises to the cell membrane. It is found in the basolateral cell membrane. Its subcellular location is the endoplasmic reticulum membrane. It localises to the early endosome. The protein resides in the recycling endosome. The protein localises to the golgi apparatus. It is found in the trans-Golgi network. Its subcellular location is the golgi apparatus membrane. It localises to the cell projection. The protein resides in the dendrite. The protein localises to the dendritic spine membrane. It is found in the axon. Its subcellular location is the postsynaptic density. It localises to the mitochondrion membrane. In terms of biological role, membrane G-protein coupled estrogen receptor that binds to 17-beta-estradiol (E2) with high affinity, leading to rapid and transient activation of numerous intracellular signaling pathways. Plays a role in the embryonic development of sensory and motor neurons. May induce apoptosis and reduce proliferation of brain cells. Involved in maintenance of meiotic arrest in oocytes. In Micropogonias undulatus (Atlantic croaker), this protein is G-protein coupled estrogen receptor 1 (gper1).